A 398-amino-acid chain; its full sequence is Argininosuccinate synthase (398 aa).

ATP-binding positions include 9 to 17 (AYSGGVDTS) and Ala-37. Residue Tyr-88 coordinates L-citrulline. Gly-118 serves as a coordination point for ATP. Thr-120, Asn-124, and Asp-125 together coordinate L-aspartate. An L-citrulline-binding site is contributed by Asn-124. Arg-128, Ser-176, Ser-185, Glu-261, and Tyr-273 together coordinate L-citrulline.

The protein belongs to the argininosuccinate synthase family. Type 1 subfamily. As to quaternary structure, homotetramer.

It localises to the cytoplasm. The enzyme catalyses L-citrulline + L-aspartate + ATP = 2-(N(omega)-L-arginino)succinate + AMP + diphosphate + H(+). Its pathway is amino-acid biosynthesis; L-arginine biosynthesis; L-arginine from L-ornithine and carbamoyl phosphate: step 2/3. This chain is Argininosuccinate synthase, found in Gloeobacter violaceus (strain ATCC 29082 / PCC 7421).